Consider the following 309-residue polypeptide: Foldase protein PrsA 2 (309 aa).

Residues 1-22 (MKQMNKLITGVVTLATVVTLSA) form the signal peptide. Cys23 carries the N-palmitoyl cysteine lipid modification. Residue Cys23 is the site of S-diacylglycerol cysteine attachment. Positions 146–241 (TPTMTAEIMQ…RTYHIIKVTK (96 aa)) constitute a PpiC domain.

Belongs to the PrsA family.

It localises to the cell membrane. The enzyme catalyses [protein]-peptidylproline (omega=180) = [protein]-peptidylproline (omega=0). Plays a major role in protein secretion by helping the post-translocational extracellular folding of several secreted proteins. The polypeptide is Foldase protein PrsA 2 (prsA2) (Streptococcus pyogenes serotype M1).